Here is a 301-residue protein sequence, read N- to C-terminus: Ribosomal RNA small subunit methyltransferase H (301 aa).

S-adenosyl-L-methionine is bound by residues 31–33 (GGY), aspartate 49, phenylalanine 76, aspartate 97, and glutamine 104.

Belongs to the methyltransferase superfamily. RsmH family.

It is found in the cytoplasm. The catalysed reaction is cytidine(1402) in 16S rRNA + S-adenosyl-L-methionine = N(4)-methylcytidine(1402) in 16S rRNA + S-adenosyl-L-homocysteine + H(+). Functionally, specifically methylates the N4 position of cytidine in position 1402 (C1402) of 16S rRNA. In Ehrlichia ruminantium (strain Gardel), this protein is Ribosomal RNA small subunit methyltransferase H.